The sequence spans 156 residues: ATP synthase subunit b (156 aa).

The helical transmembrane segment at 7–27 (LFLQAVVFAILVWFTMKFVWP) threads the bilayer.

It belongs to the ATPase B chain family. As to quaternary structure, F-type ATPases have 2 components, F(1) - the catalytic core - and F(0) - the membrane proton channel. F(1) has five subunits: alpha(3), beta(3), gamma(1), delta(1), epsilon(1). F(0) has three main subunits: a(1), b(2) and c(10-14). The alpha and beta chains form an alternating ring which encloses part of the gamma chain. F(1) is attached to F(0) by a central stalk formed by the gamma and epsilon chains, while a peripheral stalk is formed by the delta and b chains.

It is found in the cell inner membrane. Its function is as follows. F(1)F(0) ATP synthase produces ATP from ADP in the presence of a proton or sodium gradient. F-type ATPases consist of two structural domains, F(1) containing the extramembraneous catalytic core and F(0) containing the membrane proton channel, linked together by a central stalk and a peripheral stalk. During catalysis, ATP synthesis in the catalytic domain of F(1) is coupled via a rotary mechanism of the central stalk subunits to proton translocation. In terms of biological role, component of the F(0) channel, it forms part of the peripheral stalk, linking F(1) to F(0). The sequence is that of ATP synthase subunit b from Polaromonas naphthalenivorans (strain CJ2).